Reading from the N-terminus, the 379-residue chain is Cysteine-rich receptor-like protein kinase 44 (379 aa).

Residues 56-336 (FSPYNHLGEG…VRMLNANSFT (281 aa)) enclose the Protein kinase domain. Residues 62–70 (LGEGGFGAV) and Lys84 contribute to the ATP site. The residue at position 129 (Tyr129) is a Phosphotyrosine. Asp181 functions as the Proton acceptor in the catalytic mechanism. At Ser185 the chain carries Phosphoserine. Thr223 is modified (phosphothreonine). Residue Tyr231 is modified to Phosphotyrosine.

The protein belongs to the protein kinase superfamily. Ser/Thr protein kinase family. CRK subfamily.

The catalysed reaction is L-seryl-[protein] + ATP = O-phospho-L-seryl-[protein] + ADP + H(+). It carries out the reaction L-threonyl-[protein] + ATP = O-phospho-L-threonyl-[protein] + ADP + H(+). The chain is Cysteine-rich receptor-like protein kinase 44 from Arabidopsis thaliana (Mouse-ear cress).